The following is a 236-amino-acid chain: Protein YIPF6 (236 aa).

The residue at position 2 (alanine 2) is an N-acetylalanine. Residues 2–84 (AEAVESPGDP…HVLYPRKSNT (83 aa)) are Cytoplasmic-facing. At serine 7 the chain carries Phosphoserine. A helical membrane pass occupies residues 85 to 105 (LLRDWDLWGPLILCVTLALML). Residues 106 to 115 (QRGSVDSEKD) are Lumenal-facing. The chain crosses the membrane as a helical span at residues 116-136 (GGPQFAEVFVIVWFGAVTITL). Topologically, residues 137-146 (NSKLLGGNIS) are cytoplasmic. Residues 147-167 (FFQSLCVLGYCILPLTMAMLV) traverse the membrane as a helical segment. The Lumenal portion of the chain corresponds to 168–184 (CRLVLLAEPGPVNFMVR). A helical membrane pass occupies residues 185–205 (LFVVIIMFAWSIVASTAFLAD). Topologically, residues 206–212 (SQPPNRK) are cytoplasmic. The helical transmembrane segment at 213–233 (ALAVYPVFLFYFVISWMILTF) threads the bilayer. The Lumenal portion of the chain corresponds to 234 to 236 (TPQ).

Belongs to the YIP1 family. As to quaternary structure, predominantly interacts with YIPF1 or YIPF2, but may also form a ternary complex with YIPF1 and YIPF2. This interaction may stabilize YIPF1 and YIPF2.

It is found in the golgi apparatus membrane. Its function is as follows. May be required for stable YIPF1 and YIPF2 protein expression. The chain is Protein YIPF6 (YIPF6) from Bos taurus (Bovine).